We begin with the raw amino-acid sequence, 296 residues long: uncharacterized protein (296 aa).

Positions 1–20 (MRKFIFVLLTLLLVSPFSFA) are cleaved as a signal peptide.

This is an uncharacterized protein from Escherichia coli (strain K12).